The sequence spans 407 residues: uncharacterized protein (407 aa).

Disordered regions lie at residues 73-93 (SPHS…VHGG) and 116-202 (SGSI…IKPS). Repeat copies occupy residues 112–116 (GSIRS), 117–121 (GSIRS), 122–126 (GSIRN), 127–131 (GSIRS), and 132–136 (GSVRD). The tract at residues 112–136 (GSIRSGSIRSGSIRNGSIRSGSVRD) is 5 X 5 AA tandem repeats of G-[S]-[IV]-R-[DNS]. Residues 116–132 (SGSIRSGSIRNGSIRSG) show a composition bias toward low complexity. The segment covering 187-202 (NHYAESEYSEKSIKPS) has biased composition (basic and acidic residues).

It belongs to the asfivirus B407L family.

This is an uncharacterized protein from Ornithodoros (relapsing fever ticks).